The following is a 263-amino-acid chain: Oxidoreductase UcpA (263 aa).

10 to 32 lines the NAD(+) pocket; that stretch reads LITGASQGIGEGIARVFARHGAN. Ser141 provides a ligand contact to substrate. The Proton acceptor role is filled by Tyr155.

Belongs to the short-chain dehydrogenases/reductases (SDR) family.

The chain is Oxidoreductase UcpA (ucpA) from Salmonella typhi.